Here is an 83-residue protein sequence, read N- to C-terminus: Large ribosomal subunit protein bL31B (83 aa).

The protein belongs to the bacterial ribosomal protein bL31 family. Type B subfamily. Part of the 50S ribosomal subunit.

Its function is as follows. Binds the 23S rRNA. The protein is Large ribosomal subunit protein bL31B of Lactobacillus delbrueckii subsp. bulgaricus (strain ATCC 11842 / DSM 20081 / BCRC 10696 / JCM 1002 / NBRC 13953 / NCIMB 11778 / NCTC 12712 / WDCM 00102 / Lb 14).